The primary structure comprises 749 residues: Protein SWAP (749 aa).

A dry CEEERYL region spans residues 8–124 (SNVHVQEYKD…RNDQRNAIGF (117 aa)). The segment covering 105–118 (EQEKEEEEKRRNDQ) has biased composition (basic and acidic residues). The disordered stretch occupies residues 105–149 (EQEKEEEEKRRNDQRNAIGFDYGTGKVKARESDSEDEPFEPPEGI). An SURP motif 1 repeat occupies 166–209 (IIEKTASFIVANGTQMEIVIKAKQRNNAEQFGFLEFDHRLNPFY). The disordered stretch occupies residues 256 to 310 (HGSDSEDSDSDYELHPSLLSGGAKRPVTPEKPGAIGPRKKPVEPEKPPDFTLKPV). The SURP motif 2 repeat unit spans residues 391 to 431 (ILNSYAEHVAQRGLEAEASLAAREDLQLHFMEPKSPYYSYY). The segment covering 458-478 (PAPPSAVSSPGPSSLMSLNLS) has biased composition (low complexity). Disordered stretches follow at residues 458 to 498 (PAPP…SSRL), 537 to 592 (LRND…QVDR), and 608 to 749 (KAKK…DRRR). The segment covering 538 to 552 (RNDEPRDESSFRFDP) has biased composition (basic and acidic residues). Residues 560–569 (PSDTTANFSD) are compositionally biased toward polar residues. Positions 574–583 (FPPPTPPVIP) are enriched in pro residues. 2 stretches are compositionally biased toward basic and acidic residues: residues 608-659 (KAKK…RSLD) and 679-689 (EEMKRTDEDRE). Basic residues-rich tracts occupy residues 690-704 (RKRH…RRSR) and 714-749 (EHKK…DRRR).

In terms of biological role, it is a regulator of pre-mRNA splicing (and, possibly, of other RNA processing events). It may regulate its own expression at the level of RNA processing. This chain is Protein SWAP (swp-1), found in Caenorhabditis elegans.